Here is a 78-residue protein sequence, read N- to C-terminus: Small ribosomal subunit protein bS18 (78 aa).

It belongs to the bacterial ribosomal protein bS18 family. In terms of assembly, part of the 30S ribosomal subunit. Forms a tight heterodimer with protein bS6.

Binds as a heterodimer with protein bS6 to the central domain of the 16S rRNA, where it helps stabilize the platform of the 30S subunit. This Beutenbergia cavernae (strain ATCC BAA-8 / DSM 12333 / CCUG 43141 / JCM 11478 / NBRC 16432 / NCIMB 13614 / HKI 0122) protein is Small ribosomal subunit protein bS18.